Reading from the N-terminus, the 208-residue chain is FMN-dependent NADH:quinone oxidoreductase (208 aa).

FMN contacts are provided by residues 17-19 (SNS), 99-102 (MWNL), and 143-146 (SRGG).

The protein belongs to the azoreductase type 1 family. In terms of assembly, homodimer. FMN is required as a cofactor.

It catalyses the reaction 2 a quinone + NADH + H(+) = 2 a 1,4-benzosemiquinone + NAD(+). It carries out the reaction N,N-dimethyl-1,4-phenylenediamine + anthranilate + 2 NAD(+) = 2-(4-dimethylaminophenyl)diazenylbenzoate + 2 NADH + 2 H(+). Its function is as follows. Quinone reductase that provides resistance to thiol-specific stress caused by electrophilic quinones. Functionally, also exhibits azoreductase activity. Catalyzes the reductive cleavage of the azo bond in aromatic azo compounds to the corresponding amines. The polypeptide is FMN-dependent NADH:quinone oxidoreductase (Staphylococcus haemolyticus (strain JCSC1435)).